Reading from the N-terminus, the 143-residue chain is Small ribosomal subunit protein uS12 (143 aa).

Proline 62 is modified (hydroxyproline).

It belongs to the universal ribosomal protein uS12 family. Component of the 40S small ribosomal subunit.

It is found in the cytoplasm. It localises to the cytosol. The protein localises to the rough endoplasmic reticulum. The polypeptide is Small ribosomal subunit protein uS12 (rps-23) (Caenorhabditis elegans).